A 770-amino-acid polypeptide reads, in one-letter code: Signal transducer and activator of transcription 3 (770 aa).

At alanine 2 the chain carries N-acetylalanine. 2 positions are modified to N6-acetyllysine: lysine 49 and lysine 87. Residues 150 to 162 carry the Essential for nuclear import motif; sequence DVRKRVQDLEQKM. The region spanning 580 to 670 is the SH2 domain; sequence WNEGYIMGFI…DATNILVSPL (91 aa). Allysine; alternate is present on residues lysine 601, lysine 615, and lysine 631. Lysine 601, lysine 615, and lysine 631 each carry N6-acetyllysine; alternate. Tyrosine 640 carries the phosphotyrosine; by TYK2 modification. At lysine 685 the chain carries Allysine; alternate. Lysine 685 bears the N6-acetyllysine; alternate mark. A Phosphotyrosine modification is found at proline 704. Tyrosine 705 carries the post-translational modification Phosphotyrosine; by FER and PTK6. At lysine 707 the chain carries N6-acetyllysine. Threonine 714 is subject to Phosphothreonine. At serine 727 the chain carries Phosphoserine; by DYRK2, NLK, NEK6, IRAK1, RPS6KA5, ZIPK/DAPK3 and PKC/PRKCE.

It belongs to the transcription factor STAT family. As to quaternary structure, forms a homodimer or a heterodimer with a related family member (at least STAT1). Component of a promoter-binding complex composed of STAT3, NFATC3 and NFATC4; complex formation is enhanced by calcineurin. Interacts with IL31RA, NCOA1, PELP1, SIPAR, SOCS7, STATIP1 and TMF1. Interacts with IL23R in presence of IL23. Interacts (via SH2 domain) with NLK. Interacts with ARL2BP; the interaction is enhanced by LIF and JAK1 expression. Interacts with KPNA4 and KPNA5; KPNA4 may be the primary mediator of nuclear import. Interacts with CAV2; the interaction is increased on insulin-induced tyrosine phosphorylation of CAV2 and leads to STAT3 activation. Interacts with ARL2BP; interaction is enhanced with ARL2. Interacts with NEK6. Binds to CDK9 when activated and nuclear. Interacts with BMX. Interacts with ZIPK/DAPK3. Interacts with PIAS3; the interaction occurs on stimulation by IL6, CNTF or OSM and inhibits the DNA binding activity of STAT3. In prostate cancer cells, interacts with PRKCE and promotes DNA binding activity of STAT3. Interacts with STMN3, antagonizing its microtubule-destabilizing activity. Interacts with the 'Lys-129' acetylated form of BIRC5/survivin. Interacts with FER. Interacts (via SH2 domain) with EIF2AK2/PKR (via the kinase catalytic domain). Interacts with INPP5F; the interaction is independent of STAT3 Tyr-705 phosphorylation status. Interacts with FGFR4. Interacts with OCIAD1. Interacts with OCIAD2. Interacts (unphosphorylated or phosphorylated at Ser-727) with PHB1. Interacts and may form heterodimers with NHLH1. Found in a complex with SLC39A6, SLC39A10 and with the 'Ser-727' phosphorylated form of STAT3 throughout mitosis. Interacts (when phosphorylated at Tyr-705) with CD274/PD-L1; promoting nuclear translocation of CD274/PD-L1. Interacts (when acetylated) with EP300 (via bromo domain); interaction takes place following STAT3 acetylation by EP300 and promotes enhanceosome assembly. Interacts (when acetylated) with BRD2 (via bromo domain); interaction promotes STAT3 recruitment to chromatin and T-helper Th17 cell differentiation. Interacts with FAM220A/SIPAR; the interaction occurs in both the nucleus and the cytoplasm, is enhanced by IL6 and promotes STAT3 dephosphorylation. Interacts in both unphosphorylated and phosphorylated forms with FAM220A but interacts preferentially in the phosphorylated form in the nucleus. Interacts with PTPN2; the interaction is promoted by FAM220A and leads to STAT3 dephosphorylation which negatively regulates STAT3 transcriptional activator activity. In terms of assembly, (Microbial infection) Interacts with HCV core protein. (Microbial infection) Interacts with S.typhimurium SarA. As to quaternary structure, (Microbial infection) Interacts with human cytomegalovirus (HHV-5) immediate early protein IE1; this interaction leads to STAT3 nuclear accumulation and disruption of IL6-induced STAT3 phosphorylation. In terms of processing, tyrosine phosphorylated upon stimulation with EGF. Tyrosine phosphorylated in response to constitutively activated FGFR1, FGFR2, FGFR3 and FGFR4. Activated through tyrosine phosphorylation by BMX. Tyrosine phosphorylated in response to IL6, IL11, LIF, CNTF, KITLG/SCF, CSF1, EGF, PDGF, IFN-alpha, LEP and OSM. Activated KIT promotes phosphorylation on tyrosine residues and subsequent translocation to the nucleus. Phosphorylated on serine upon DNA damage, probably by ATM or ATR. Serine phosphorylation is important for the formation of stable DNA-binding STAT3 homodimers and maximal transcriptional activity. ARL2BP may participate in keeping the phosphorylated state of STAT3 within the nucleus. Upon LPS challenge, phosphorylated within the nucleus by IRAK1. Upon erythropoietin treatment, phosphorylated on Ser-727 by RPS6KA5. Dephosphorylation on tyrosine residues by PTPN2 negatively regulates IL6/interleukin-6 signaling. Phosphorylation at Tyr-705 by PTK6, isoform M2 of PKM (PKM2) or FER leads to an increase of its transcriptional activity. Phosphorylation at Tyr-705 is increased in the presence of calcineurin. Phosphorylation at Tyr-640 by TYK2 negatively regulates transcriptional activity. Post-translationally, acetylated on lysine residues by EP300/p300, promoting its activation. Acetylation at Lys-49 and Lys-87 by EP300/p300 promotes its activation. Acetylation at Lys-87 by EP300/p300 promotes its association with BRD2 and recruitment to chromatin. Deacetylated at Lys-49 and Lys-87 by HDAC1. Acetylation at Lys-685 by EP300/p300 promotes its homodimerization and activation. Deacetylated at Lys-685 by HDAC3. Acetylated on lysine residues by CREBBP. Deacetylation by LOXL3 leads to disrupt STAT3 dimerization and inhibit STAT3 transcription activity. Oxidation of lysine residues to allysine on STAT3 preferentially takes place on lysine residues that are acetylated. Some lysine residues are oxidized to allysine by LOXL3, leading to disrupt STAT3 dimerization and inhibit STAT3 transcription activity. Oxidation of lysine residues to allysine on STAT3 preferentially takes place on lysine residues that are acetylated. In terms of processing, (Microbial infection) Phosphorylated on Tyr-705 in the presence of S.typhimurium SarA. Heart, brain, placenta, lung, liver, skeletal muscle, kidney and pancreas. Expressed in naive CD4(+) T cells as well as T-helper Th17, Th1 and Th2 cells.

It localises to the cytoplasm. The protein resides in the nucleus. Signal transducer and transcription activator that mediates cellular responses to interleukins, KITLG/SCF, LEP and other growth factors. Once activated, recruits coactivators, such as NCOA1 or MED1, to the promoter region of the target gene. May mediate cellular responses to activated FGFR1, FGFR2, FGFR3 and FGFR4. Upon activation of IL6ST/gp130 signaling by interleukin-6 (IL6), binds to the IL6-responsive elements identified in the promoters of various acute-phase protein genes. Activated by IL31 through IL31RA. Acts as a regulator of inflammatory response by regulating differentiation of naive CD4(+) T-cells into T-helper Th17 or regulatory T-cells (Treg): acetylation promotes its transcription activity and cell differentiation while deacetylation and oxidation of lysine residues by LOXL3 inhibits differentiation. Involved in cell cycle regulation by inducing the expression of key genes for the progression from G1 to S phase, such as CCND1. Mediates the effects of LEP on melanocortin production, body energy homeostasis and lactation. May play an apoptotic role by transctivating BIRC5 expression under LEP activation. Cytoplasmic STAT3 represses macroautophagy by inhibiting EIF2AK2/PKR activity. Plays a crucial role in basal beta cell functions, such as regulation of insulin secretion. Following JAK/STAT signaling activation and as part of a complex with NFATC3 and NFATC4, binds to the alpha-beta E4 promoter region of CRYAB and activates transcription in cardiomyocytes. The sequence is that of Signal transducer and activator of transcription 3 from Homo sapiens (Human).